We begin with the raw amino-acid sequence, 450 residues long: BAG family molecular chaperone regulator 5 (450 aa).

5 BAG domains span residues 9-86 (SIKR…EQNA), 95-167 (EAIF…ESCA), 182-260 (SVSK…DLDE), 275-350 (SILK…DLKE), and 365-442 (EHQS…YYLD).

As to quaternary structure, binds to the ATPase domain of HSP/HSC70 chaperones.

Co-chaperone for HSP/HSP70 proteins. It functions as a nucleotide-exchange factor promoting the release of ADP from HSP70, thereby activating HSP70-mediated protein refolding. The chain is BAG family molecular chaperone regulator 5 (BAG5) from Gallus gallus (Chicken).